The following is a 424-amino-acid chain: Double-stranded RNA-binding protein 8 (424 aa).

Pro residues predominate over residues 1–10; sequence MDMPPTPLPP. Residues 1 to 22 form a disordered region; that stretch reads MDMPPTPLPPETANTSPAPNGA. 2 DRBM domains span residues 33–102 and 118–185; these read VFKS…EIVK and LCKN…AIQG. Basic and acidic residues-rich tracts occupy residues 287–308 and 318–328; these read KRVE…ENQH and DEARVEQEPSR. The disordered stretch occupies residues 287 to 330; it reads KRVEAEPPRDIEMVQPDKENQHSDAALVQPDDEARVEQEPSRDI.

Functionally, binds double-stranded RNA. The polypeptide is Double-stranded RNA-binding protein 8 (DRB8) (Oryza sativa subsp. japonica (Rice)).